Reading from the N-terminus, the 727-residue chain is Cadmium-transporting ATPase (727 aa).

Residues 12 to 75 (EMNVYRVQGF…AGAFENLKVS (64 aa)) enclose the HMA domain. Positions 23 and 26 each coordinate Cd(2+). Transmembrane regions (helical) follow at residues 106 to 126 (STLLFATLLIAFGYLSHFVNG), 130 to 150 (LVTSMLFVGSIVIGGYSLFKV), 171 to 191 (IGATIIGKWAEASIVVILFAI), 336 to 356 (IIMVIAALVAVVPPLFFGGSW), and 364 to 384 (LAVLVVGCPCALVISTPISIV). Asp415 (4-aspartylphosphate intermediate) is an active-site residue. 2 helical membrane-spanning segments follow: residues 672 to 694 (LNIIKANITFAIGIKIIALLLVI) and 699 to 721 (TLWIAILSDMGATILVALNSLRL).

The protein belongs to the cation transport ATPase (P-type) (TC 3.A.3) family. Type IB subfamily.

The protein resides in the cell membrane. It carries out the reaction Cd(2+)(in) + ATP + H2O = Cd(2+)(out) + ADP + phosphate + H(+). Inhibited by the antibiotic bafilomycin A1. Partially inhibited by DCCD, nigericin and FCCP. In terms of biological role, couples the hydrolysis of ATP with the export of cadmium. Involved in cadmium resistance. This chain is Cadmium-transporting ATPase, found in Staphylococcus aureus.